A 490-amino-acid chain; its full sequence is Aspartyl/glutamyl-tRNA(Asn/Gln) amidotransferase subunit B (490 aa).

This sequence belongs to the GatB/GatE family. GatB subfamily. As to quaternary structure, heterotrimer of A, B and C subunits.

It carries out the reaction L-glutamyl-tRNA(Gln) + L-glutamine + ATP + H2O = L-glutaminyl-tRNA(Gln) + L-glutamate + ADP + phosphate + H(+). The catalysed reaction is L-aspartyl-tRNA(Asn) + L-glutamine + ATP + H2O = L-asparaginyl-tRNA(Asn) + L-glutamate + ADP + phosphate + 2 H(+). Allows the formation of correctly charged Asn-tRNA(Asn) or Gln-tRNA(Gln) through the transamidation of misacylated Asp-tRNA(Asn) or Glu-tRNA(Gln) in organisms which lack either or both of asparaginyl-tRNA or glutaminyl-tRNA synthetases. The reaction takes place in the presence of glutamine and ATP through an activated phospho-Asp-tRNA(Asn) or phospho-Glu-tRNA(Gln). The polypeptide is Aspartyl/glutamyl-tRNA(Asn/Gln) amidotransferase subunit B (Burkholderia ambifaria (strain MC40-6)).